We begin with the raw amino-acid sequence, 370 residues long: Cytochrome b (370 aa).

Helical transmembrane passes span phenylalanine 25–valine 45, tryptophan 69–isoleucine 90, tryptophan 105–leucine 125, and phenylalanine 170–leucine 190. 2 residues coordinate heme b: histidine 75 and histidine 89. Positions 174 and 188 each coordinate heme b. Histidine 193 is an a ubiquinone binding site. A run of 4 helical transmembrane segments spans residues tyrosine 218–phenylalanine 238, leucine 280–histidine 300, phenylalanine 312–threonine 332, and phenylalanine 339–proline 358.

Belongs to the cytochrome b family. The cytochrome bc1 complex contains 3 respiratory subunits (MT-CYB, CYC1 and UQCRFS1), 2 core proteins (UQCRC1 and UQCRC2) and probably 6 low-molecular weight proteins. Heme b is required as a cofactor.

Its subcellular location is the mitochondrion inner membrane. In terms of biological role, component of the ubiquinol-cytochrome c reductase complex (complex III or cytochrome b-c1 complex) that is part of the mitochondrial respiratory chain. The b-c1 complex mediates electron transfer from ubiquinol to cytochrome c. Contributes to the generation of a proton gradient across the mitochondrial membrane that is then used for ATP synthesis. The protein is Cytochrome b (MT-CYB) of Chilabothrus strigilatus fosteri (Bimini Island boa constrictor).